The primary structure comprises 104 residues: Large ribosomal subunit protein bL21 (104 aa).

It belongs to the bacterial ribosomal protein bL21 family. In terms of assembly, part of the 50S ribosomal subunit. Contacts protein L20.

Its function is as follows. This protein binds to 23S rRNA in the presence of protein L20. The chain is Large ribosomal subunit protein bL21 from Lactococcus lactis subsp. cremoris (strain MG1363).